We begin with the raw amino-acid sequence, 306 residues long: Zinc finger protein 625 (306 aa).

The C2H2-type 1; degenerate zinc finger occupies 31 to 53 (PRVKSCGEVSVGHASLNRHHRAD). 8 consecutive C2H2-type zinc fingers follow at residues 69 to 91 (YKCT…EWAH), 97 to 119 (YDCE…RIMH), 125 to 147 (YKCN…KRTH), 153 to 175 (YECK…ERTH), 181 to 203 (YECS…KITH), 209 to 231 (YECK…ERTH), 237 to 259 (YECK…GRTH), and 265 to 287 (YECK…ERTH). A Phosphotyrosine modification is found at tyrosine 209. The segment at 287–306 (HTGEKPCSSNTSKGQGEKIA) is disordered.

The protein belongs to the krueppel C2H2-type zinc-finger protein family.

It is found in the nucleus. May be involved in transcriptional regulation. In Homo sapiens (Human), this protein is Zinc finger protein 625 (ZNF625).